Reading from the N-terminus, the 439-residue chain is Xylose isomerase (439 aa).

Residues His-101 and Asp-104 contribute to the active site. Mg(2+) contacts are provided by Glu-232, Glu-268, His-271, Asp-296, Asp-307, Asp-309, and Asp-339.

This sequence belongs to the xylose isomerase family. In terms of assembly, homotetramer. Mg(2+) serves as cofactor.

It localises to the cytoplasm. It carries out the reaction alpha-D-xylose = alpha-D-xylulofuranose. This is Xylose isomerase from Pectobacterium atrosepticum (strain SCRI 1043 / ATCC BAA-672) (Erwinia carotovora subsp. atroseptica).